Here is a 248-residue protein sequence, read N- to C-terminus: Type III pantothenate kinase (248 aa).

6 to 13 (DCGNSLIK) is a binding site for ATP. Residues Tyr92 and 99–102 (GLDR) contribute to the substrate site. Asp101 acts as the Proton acceptor in catalysis. Asp121 is a binding site for K(+). Thr124 serves as a coordination point for ATP. Thr180 is a binding site for substrate.

This sequence belongs to the type III pantothenate kinase family. In terms of assembly, homodimer. It depends on NH4(+) as a cofactor. Requires K(+) as cofactor.

The protein localises to the cytoplasm. It carries out the reaction (R)-pantothenate + ATP = (R)-4'-phosphopantothenate + ADP + H(+). It participates in cofactor biosynthesis; coenzyme A biosynthesis; CoA from (R)-pantothenate: step 1/5. Catalyzes the phosphorylation of pantothenate (Pan), the first step in CoA biosynthesis. The protein is Type III pantothenate kinase of Pseudomonas aeruginosa (strain LESB58).